The primary structure comprises 93 residues: Small ribosomal subunit protein uS19 (93 aa).

It belongs to the universal ribosomal protein uS19 family.

In terms of biological role, protein S19 forms a complex with S13 that binds strongly to the 16S ribosomal RNA. This is Small ribosomal subunit protein uS19 from Mycolicibacterium smegmatis (strain ATCC 700084 / mc(2)155) (Mycobacterium smegmatis).